The chain runs to 680 residues: Translation factor GUF1 homolog, chloroplastic (680 aa).

Residues 1–51 constitute a chloroplast transit peptide; sequence MAAKINSLAALVSLQASHHHHXSTPFYFSPFSPHLSTTLTSRRRSLRSAVV. In terms of domain architecture, tr-type G spans 83–264; that stretch reads SNIRNFCIIA…AIVKRIPPPC (182 aa). GTP contacts are provided by residues 92–99, 157–161, and 211–214; these read AHIDHGKS, DTPGH, and NKID.

It belongs to the TRAFAC class translation factor GTPase superfamily. Classic translation factor GTPase family. LepA subfamily.

The protein resides in the plastid. The protein localises to the chloroplast. It carries out the reaction GTP + H2O = GDP + phosphate + H(+). In terms of biological role, promotes chloroplast protein synthesis. May act as a fidelity factor of the translation reaction, by catalyzing a one-codon backward translocation of tRNAs on improperly translocated ribosomes. The sequence is that of Translation factor GUF1 homolog, chloroplastic from Vitis vinifera (Grape).